A 161-amino-acid chain; its full sequence is Cyclic pyranopterin monophosphate synthase (161 aa).

Substrate is bound by residues 76-78 (MCH) and 114-115 (ME). Residue Asp129 is part of the active site.

It belongs to the MoaC family. Homohexamer; trimer of dimers.

It catalyses the reaction (8S)-3',8-cyclo-7,8-dihydroguanosine 5'-triphosphate = cyclic pyranopterin phosphate + diphosphate. The protein operates within cofactor biosynthesis; molybdopterin biosynthesis. Functionally, catalyzes the conversion of (8S)-3',8-cyclo-7,8-dihydroguanosine 5'-triphosphate to cyclic pyranopterin monophosphate (cPMP). The protein is Cyclic pyranopterin monophosphate synthase of Clostridium acetobutylicum (strain ATCC 824 / DSM 792 / JCM 1419 / IAM 19013 / LMG 5710 / NBRC 13948 / NRRL B-527 / VKM B-1787 / 2291 / W).